The sequence spans 154 residues: Plastocyanin, chloroplastic (154 aa).

A chloroplast-targeting transit peptide spans 1–57 (MAALSSAAVTIPSMAPSAPGRRRMRSSLVVRASLGKAAGAAAVAVAASAMLAGGAMA). The region spanning 58–154 (QEVLLGANGG…AGMVGKVTVN (97 aa)) is the Plastocyanin-like domain. Cu cation contacts are provided by His94, Cys139, His142, and Met147.

Belongs to the plastocyanin family. Cu(2+) serves as cofactor.

It is found in the plastid. Its subcellular location is the chloroplast thylakoid membrane. Participates in electron transfer between P700 and the cytochrome b6-f complex in photosystem I. The sequence is that of Plastocyanin, chloroplastic (PETE) from Oryza sativa subsp. indica (Rice).